Reading from the N-terminus, the 705-residue chain is MKKYLLEIGCEELPPKAVDTAISYFKERLEGLFENFFEYRTEENISVFGTPRRIGFILSNLREKEPSEEKTILGPPAKVGIDEKGNFTKAALAFASKNNIPVEQLKIIENEKGRYIGATLIKEGKDIRTFIQEVIPDLITKIPFPKLMRWNETGFRFSRPVRWIVSLLDNEVVSFSIAGIDADRYTHLHRFMTTPTGRGERKKIPDVDSYFQIMKLGFIIPKYEERKEAVKTQLTGFANSINAEPVIDEDLLDEVTNLTEFPVGILGDFSPEYLILPKEVIITVCKVHQRYFNFEKDGKLIPKFLAFSNTAVKDREKVKSGYEKVLKARLEDALFFYEEDLKHNLEDFYPQLEGIQFHHKLGSMLDKVKRNGEIAVLLSRELNFENLKDLLRANKLSKCDLLTEMVKEFDELQGIMGMHYALKQGEKEEVAKAIYEHYLPKTSDDQLPETDIGTLLSLSDKLDTVISFISIGEKPKATADPFGIRRNSIGIVRILVEKGIDLDLKKLLQDISREARKVKILRLADIEKEWEIIFDERTIPEILDFIEGRFIAYMKDKGFDTDIINSVVSVDSYNLYRNYLKIKSIQELKKNPEFTDIMTVFKRVGRIIPEEFEEHFNPDTLVQDEEKELYRKYTEVNKIFSKDVEDRRYTEALNELLKMKPFIDKFFDNVMVMTEDKKLRENRLSLMKLINNMFRKIADFTKITT.

The protein belongs to the class-II aminoacyl-tRNA synthetase family. In terms of assembly, tetramer of two alpha and two beta subunits.

The protein resides in the cytoplasm. The enzyme catalyses tRNA(Gly) + glycine + ATP = glycyl-tRNA(Gly) + AMP + diphosphate. The protein is Glycine--tRNA ligase beta subunit of Persephonella marina (strain DSM 14350 / EX-H1).